Here is a 31-residue protein sequence, read N- to C-terminus: U14-ctenitoxin-Co1c (31 aa).

As to expression, expressed by the venom gland.

Its subcellular location is the secreted. In terms of biological role, not toxic to mice by intracerebroventricular injection. The protein is U14-ctenitoxin-Co1c of Ctenus ornatus (Brazilian spider).